Reading from the N-terminus, the 181-residue chain is MYCLFCQHTDTRVIDSRVSEDGATIRRRRECEACGERFSTLETIELKLPVIIKKDGGREAFDGRKLRTSFDRALQKRPVAEERIEMAMRAVIHRLRMAGEREVPSIVVGECVMAELRKLDHVGYVRFASVYRSFQDVADFREEIEKLESELLVSREQLPLLEAAMESMGHPSIDQGGKHGA.

The segment at 3 to 34 (CLFCQHTDTRVIDSRVSEDGATIRRRRECEAC) is a zinc-finger region. An ATP-cone domain is found at 49–139 (PVIIKKDGGR…VYRSFQDVAD (91 aa)).

Belongs to the NrdR family. Requires Zn(2+) as cofactor.

Its function is as follows. Negatively regulates transcription of bacterial ribonucleotide reductase nrd genes and operons by binding to NrdR-boxes. This Xylella fastidiosa (strain M12) protein is Transcriptional repressor NrdR.